A 195-amino-acid chain; its full sequence is Ribonuclease HII (195 aa).

Positions 6–195 (SLIAGVDEVG…KSFISRLEIN (190 aa)) constitute an RNase H type-2 domain. A divalent metal cation-binding residues include aspartate 12, glutamate 13, and aspartate 108.

Belongs to the RNase HII family. Mn(2+) serves as cofactor. It depends on Mg(2+) as a cofactor.

It localises to the cytoplasm. The catalysed reaction is Endonucleolytic cleavage to 5'-phosphomonoester.. Its function is as follows. Endonuclease that specifically degrades the RNA of RNA-DNA hybrids. This is Ribonuclease HII from Prochlorococcus marinus (strain NATL1A).